A 141-amino-acid chain; its full sequence is Hemoglobin subunit alpha (141 aa).

The Globin domain occupies 1–141; sequence VLSEEDKSHV…VSAMLTSKYR (141 aa). An O2-binding site is contributed by His58. Heme b is bound at residue His87.

The protein belongs to the globin family. In terms of assembly, heterotetramer of two alpha chains and two beta chains. Red blood cells.

Its function is as follows. Involved in oxygen transport from the lung to the various peripheral tissues. This Caiman crocodilus (Spectacled caiman) protein is Hemoglobin subunit alpha (HBA).